The chain runs to 79 residues: ATP synthase subunit 9, mitochondrial (79 aa).

2 helical membrane passes run 21–41 (SGLI…ILAF) and 59–79 (FALT…ILFI).

The protein belongs to the ATPase C chain family. As to quaternary structure, F-type ATPases have 2 components, CF(1) - the catalytic core - and CF(0) - the membrane proton channel. CF(1) has five subunits: alpha(3), beta(3), gamma(1), delta(1), epsilon(1). CF(0) has three main subunits: a, b and c.

The protein resides in the mitochondrion membrane. Functionally, mitochondrial membrane ATP synthase (F(1)F(0) ATP synthase or Complex V) produces ATP from ADP in the presence of a proton gradient across the membrane which is generated by electron transport complexes of the respiratory chain. F-type ATPases consist of two structural domains, F(1) - containing the extramembraneous catalytic core and F(0) - containing the membrane proton channel, linked together by a central stalk and a peripheral stalk. During catalysis, ATP synthesis in the catalytic domain of F(1) is coupled via a rotary mechanism of the central stalk subunits to proton translocation. Part of the complex F(0) domain. A homomeric c-ring of probably 10 subunits is part of the complex rotary element. The sequence is that of ATP synthase subunit 9, mitochondrial (ATP9) from Acanthamoeba castellanii (Amoeba).